The chain runs to 189 residues: Probable pericyclase scpY (189 aa).

Belongs to the pericyclase pydY family.

The protein operates within mycotoxin biosynthesis. In terms of biological role, probable pericyclase; part of the gene scp cluster that mediates the biosynthesis of a hirsutellone-like compound that has still to be identified. This chain is Probable pericyclase scpY, found in Mollisia scopiformis (Conifer needle endophyte fungus).